Consider the following 427-residue polypeptide: Enolase 1 (427 aa).

Glutamine 162 is a binding site for (2R)-2-phosphoglycerate. Glutamate 204 (proton donor) is an active-site residue. 3 residues coordinate Mg(2+): aspartate 241, glutamate 285, and aspartate 312. (2R)-2-phosphoglycerate contacts are provided by lysine 337, arginine 366, serine 367, and lysine 388. The active-site Proton acceptor is lysine 337.

Belongs to the enolase family. Requires Mg(2+) as cofactor.

The protein localises to the cytoplasm. It localises to the secreted. The protein resides in the cell surface. It carries out the reaction (2R)-2-phosphoglycerate = phosphoenolpyruvate + H2O. Its pathway is carbohydrate degradation; glycolysis; pyruvate from D-glyceraldehyde 3-phosphate: step 4/5. Functionally, catalyzes the reversible conversion of 2-phosphoglycerate (2-PG) into phosphoenolpyruvate (PEP). It is essential for the degradation of carbohydrates via glycolysis. This Chlorobaculum tepidum (strain ATCC 49652 / DSM 12025 / NBRC 103806 / TLS) (Chlorobium tepidum) protein is Enolase 1.